Consider the following 116-residue polypeptide: MRVKTGTVRRKRHKKILKMAKGFYSGRRKHFRKAKEQVERSLVYAFRDRKQKKRDFRKLWIIRINAACRLNDISYSRFINGLKKANIDLDRKILADLAMNEPEVFAQIVEKAKAAL.

Belongs to the bacterial ribosomal protein bL20 family.

In terms of biological role, binds directly to 23S ribosomal RNA and is necessary for the in vitro assembly process of the 50S ribosomal subunit. It is not involved in the protein synthesizing functions of that subunit. The protein is Large ribosomal subunit protein bL20 of Nautilia profundicola (strain ATCC BAA-1463 / DSM 18972 / AmH).